The chain runs to 1078 residues: A type blood alpha-D-galactosamine galactosaminidase (1078 aa).

A signal peptide spans 1 to 26 (MRGKKFISLTLSTMLCLQLLPTASFA). Residues 306 to 570 (PDSSYDLRWE…NNIWYPSAVG (265 aa)) are glycoside hydrolase 36 domain. Asp-463 (nucleophile) is an active-site residue. The active site involves Asp-532. The segment at 699–1078 (PDPEPVDPDY…LDYLTYTTNA (380 aa)) is not required for activity on soluble substrates.

It belongs to the glycosyl hydrolase 36 family.

It carries out the reaction an alpha-D-galactosaminyl-(1-&gt;3)-[alpha-L-fucosyl-(1-&gt;2)]-beta-D-galactosyl derivative + H2O = D-galactosamine + an alpha-L-fucosyl-(1-&gt;2)-beta-D-galactosyl derivative. Functionally, one of an enzyme pair that work together to convert the A antigen to the H antigen of the O blood type, which together release galactosamine. Catalyzes the second step in the conversion, acts on the product of the first reaction (FpGalNAcDeAc, AC P0DTR4). Is specific for galactosamine containing sugars, does not cleave GalNAc residues. The polypeptide is A type blood alpha-D-galactosamine galactosaminidase (Flavonifractor plautii (Fusobacterium plautii)).